Here is a 209-residue protein sequence, read N- to C-terminus: dTTP/UTP pyrophosphatase (209 aa).

Catalysis depends on Asp79, which acts as the Proton acceptor.

This sequence belongs to the Maf family. YhdE subfamily. A divalent metal cation is required as a cofactor.

Its subcellular location is the cytoplasm. It carries out the reaction dTTP + H2O = dTMP + diphosphate + H(+). The catalysed reaction is UTP + H2O = UMP + diphosphate + H(+). In terms of biological role, nucleoside triphosphate pyrophosphatase that hydrolyzes dTTP and UTP. May have a dual role in cell division arrest and in preventing the incorporation of modified nucleotides into cellular nucleic acids. This Chelativorans sp. (strain BNC1) protein is dTTP/UTP pyrophosphatase.